The primary structure comprises 451 residues: UDP-N-acetylmuramoylalanine--D-glutamate ligase (451 aa).

Residue 119–125 participates in ATP binding; that stretch reads GSNGKTT.

Belongs to the MurCDEF family.

It localises to the cytoplasm. It catalyses the reaction UDP-N-acetyl-alpha-D-muramoyl-L-alanine + D-glutamate + ATP = UDP-N-acetyl-alpha-D-muramoyl-L-alanyl-D-glutamate + ADP + phosphate + H(+). It participates in cell wall biogenesis; peptidoglycan biosynthesis. Its function is as follows. Cell wall formation. Catalyzes the addition of glutamate to the nucleotide precursor UDP-N-acetylmuramoyl-L-alanine (UMA). The chain is UDP-N-acetylmuramoylalanine--D-glutamate ligase from Streptococcus agalactiae serotype Ia (strain ATCC 27591 / A909 / CDC SS700).